Here is a 238-residue protein sequence, read N- to C-terminus: ATP synthase subunit a (238 aa).

The next 5 membrane-spanning stretches (helical) occupy residues 18-38, 76-96, 114-134, 166-186, and 193-213; these read LTLL…VFWA, YSLL…LGLF, NLAF…IEGV, SLAI…GLIV, and VYWW…SVFI.

The protein belongs to the ATPase A chain family. F-type ATPases have 2 components, CF(1) - the catalytic core - and CF(0) - the membrane proton channel. CF(1) has five subunits: alpha(3), beta(3), gamma(1), delta(1), epsilon(1). CF(0) has three main subunits: a(1), b(2) and c(9-12). The alpha and beta chains form an alternating ring which encloses part of the gamma chain. CF(1) is attached to CF(0) by a central stalk formed by the gamma and epsilon chains, while a peripheral stalk is formed by the delta and b chains.

It localises to the cell membrane. In terms of biological role, key component of the proton channel; it plays a direct role in the translocation of protons across the membrane. The chain is ATP synthase subunit a from Streptococcus pyogenes serotype M49 (strain NZ131).